We begin with the raw amino-acid sequence, 89 residues long: Small ribosomal subunit protein uS14 (89 aa).

It belongs to the universal ribosomal protein uS14 family. As to quaternary structure, part of the 30S ribosomal subunit. Contacts proteins S3 and S10.

Its function is as follows. Binds 16S rRNA, required for the assembly of 30S particles and may also be responsible for determining the conformation of the 16S rRNA at the A site. This chain is Small ribosomal subunit protein uS14, found in Flavobacterium johnsoniae (strain ATCC 17061 / DSM 2064 / JCM 8514 / BCRC 14874 / CCUG 350202 / NBRC 14942 / NCIMB 11054 / UW101) (Cytophaga johnsonae).